The following is a 601-amino-acid chain: ATP-dependent lipid A-core flippase (601 aa).

A run of 5 helical transmembrane segments spans residues 33–53 (CVAV…AKLI), 72–92 (VSLM…LSEY), 158–178 (VIGL…VFLV), 255–275 (LGGG…LYVV), and 283–303 (TITP…LSPI). Residues 34–315 (VAVVAMIAYA…LSQVVSVMQR (282 aa)) form the ABC transmembrane type-1 domain. The 237-residue stretch at 347-583 (IEYRHVSLVY…RGGYADLYAM (237 aa)) folds into the ABC transporter domain. 381–388 (GQSGSGKT) contacts ATP.

Belongs to the ABC transporter superfamily. Lipid exporter (TC 3.A.1.106) family. Homodimer.

The protein resides in the cell inner membrane. It catalyses the reaction ATP + H2O + lipid A-core oligosaccharideSide 1 = ADP + phosphate + lipid A-core oligosaccharideSide 2.. Functionally, involved in lipopolysaccharide (LPS) biosynthesis. Translocates lipid A-core from the inner to the outer leaflet of the inner membrane. Transmembrane domains (TMD) form a pore in the inner membrane and the ATP-binding domain (NBD) is responsible for energy generation. This is ATP-dependent lipid A-core flippase from Methylococcus capsulatus (strain ATCC 33009 / NCIMB 11132 / Bath).